We begin with the raw amino-acid sequence, 839 residues long: Probable alpha-glucuronidase A (839 aa).

An N-terminal signal peptide occupies residues 1–18 (MRWSFLTVLLWLVSLTGA). N49, N101, N148, N221, N278, N309, N342, N464, N526, N575, N681, and N731 each carry an N-linked (GlcNAc...) asparagine glycan.

It belongs to the glycosyl hydrolase 67 family.

The protein localises to the secreted. The catalysed reaction is an alpha-D-glucuronoside + H2O = D-glucuronate + an alcohol. Alpha-glucuronidase involved in the hydrolysis of xylan, a major structural heterogeneous polysaccharide found in plant biomass representing the second most abundant polysaccharide in the biosphere, after cellulose. Releases 4-O-methylglucuronic acid from xylan. This Aspergillus flavus (strain ATCC 200026 / FGSC A1120 / IAM 13836 / NRRL 3357 / JCM 12722 / SRRC 167) protein is Probable alpha-glucuronidase A (aguA).